We begin with the raw amino-acid sequence, 234 residues long: Large ribosomal subunit protein uL1 (234 aa).

The protein belongs to the universal ribosomal protein uL1 family. In terms of assembly, part of the 50S ribosomal subunit.

Functionally, binds directly to 23S rRNA. The L1 stalk is quite mobile in the ribosome, and is involved in E site tRNA release. Its function is as follows. Protein L1 is also a translational repressor protein, it controls the translation of the L11 operon by binding to its mRNA. The chain is Large ribosomal subunit protein uL1 from Salmonella arizonae (strain ATCC BAA-731 / CDC346-86 / RSK2980).